Consider the following 460-residue polypeptide: Proton extrusion protein PxcA (460 aa).

The segment at Arg84–Pro194 is disordered. A compositionally biased stretch (basic and acidic residues) spans Asn114–Phe136. The span at Leu167–Pro194 shows a compositional bias: polar residues. Transmembrane regions (helical) follow at residues Phe242 to Phe262, Gly337 to Ile357, Ile373 to Val393, and Phe420 to Ile440.

Belongs to the CemA family.

It is found in the cell inner membrane. Required for H(+) efflux immediately after light irradiation to form a rapid H(+) concentration gradient across the thylakoid membranes. Together with PxcL, contributes to transient H(+) uptake following dark to light transition. The polypeptide is Proton extrusion protein PxcA (Synechococcus sp. (strain JA-3-3Ab) (Cyanobacteria bacterium Yellowstone A-Prime)).